The following is a 361-amino-acid chain: Hydroxyproline O-arabinosyltransferase PLENTY (361 aa).

The helical; Signal-anchor transmembrane segment at 13–33 threads the bilayer; the sequence is LLMLLMVLGFFFATYNLVSMI.

The protein localises to the golgi apparatus membrane. The catalysed reaction is trans-4-hydroxy-L-prolyl-[protein] + UDP-beta-L-arabinofuranose = O-(beta-L-arabinofuranosyl)-trans-4-hydroxy-L-prolyl-[protein] + UDP + H(+). Glycosyltransferase involved in the O-arabinosylation of several proteins including extensins and small signaling peptides. Catalyzes the transfer of the initial L-arabinose to the hydroxyl group of Hyp residues. Probably involved in the arabinosylation of CLAVATA3/ESR-related (CLE) signaling peptides that move from root to shoot, to interact with receptor kinase signaling that regulates nodulation. Involved in long distance nodulation signaling events. Involved in the autoregulation of nodulation (AON), a long distance systemic signaling from root to shoot and back again, which allows legumes to limit the number of root nodules formed based on available nitrogen and previous rhizobial colonization. The protein is Hydroxyproline O-arabinosyltransferase PLENTY of Lotus japonicus (Lotus corniculatus var. japonicus).